The sequence spans 311 residues: Malate dehydrogenase (311 aa).

Residues 7–13 (GAAGGIG) and D34 each bind NAD(+). Substrate is bound by residues R81 and R87. Residues N94 and 117 to 119 (ITN) contribute to the NAD(+) site. N119 and R153 together coordinate substrate. The active-site Proton acceptor is the H177. Position 227 (M227) interacts with NAD(+).

The protein belongs to the LDH/MDH superfamily. MDH type 1 family. In terms of assembly, homodimer.

It catalyses the reaction (S)-malate + NAD(+) = oxaloacetate + NADH + H(+). Its function is as follows. Catalyzes the reversible oxidation of malate to oxaloacetate. This is Malate dehydrogenase from Shewanella halifaxensis (strain HAW-EB4).